The sequence spans 370 residues: 3-isopropylmalate dehydrogenase (370 aa).

77 to 90 (GPKWDSVPYEVRPE) is a binding site for NAD(+). 4 residues coordinate substrate: Arg-97, Arg-107, Arg-135, and Asp-226. The Mg(2+) site is built by Asp-226, Asp-250, and Asp-254. 290–302 (GSAPDIAGKGIAN) is an NAD(+) binding site.

It belongs to the isocitrate and isopropylmalate dehydrogenases family. LeuB type 1 subfamily. In terms of assembly, homodimer. Mg(2+) is required as a cofactor. The cofactor is Mn(2+).

The protein resides in the cytoplasm. The enzyme catalyses (2R,3S)-3-isopropylmalate + NAD(+) = 4-methyl-2-oxopentanoate + CO2 + NADH. It functions in the pathway amino-acid biosynthesis; L-leucine biosynthesis; L-leucine from 3-methyl-2-oxobutanoate: step 3/4. Its function is as follows. Catalyzes the oxidation of 3-carboxy-2-hydroxy-4-methylpentanoate (3-isopropylmalate) to 3-carboxy-4-methyl-2-oxopentanoate. The product decarboxylates to 4-methyl-2 oxopentanoate. The chain is 3-isopropylmalate dehydrogenase from Brucella suis biovar 1 (strain 1330).